The primary structure comprises 434 residues: Asparagine--tRNA ligase (434 aa).

Belongs to the class-II aminoacyl-tRNA synthetase family.

The protein resides in the cytoplasm. It catalyses the reaction tRNA(Asn) + L-asparagine + ATP = L-asparaginyl-tRNA(Asn) + AMP + diphosphate + H(+). This chain is Asparagine--tRNA ligase, found in Pyrococcus horikoshii (strain ATCC 700860 / DSM 12428 / JCM 9974 / NBRC 100139 / OT-3).